We begin with the raw amino-acid sequence, 156 residues long: RING finger protein 224 (156 aa).

The RING-type zinc finger occupies 23 to 70 (CIICYSAYDLSVHLPRRLYCGHTFCQACMQRLDMPAHEQHWIPCPQCR).

The chain is RING finger protein 224 (Rnf224) from Mus musculus (Mouse).